The chain runs to 61 residues: Large ribosomal subunit protein bL28 (61 aa).

A disordered region spans residues 1 to 26 (MAKDFLNGKRTHFGNKRSHALNSSRR). Basic residues predominate over residues 9–19 (KRTHFGNKRSH).

This sequence belongs to the bacterial ribosomal protein bL28 family.

The polypeptide is Large ribosomal subunit protein bL28 (Levilactobacillus brevis (strain ATCC 367 / BCRC 12310 / CIP 105137 / JCM 1170 / LMG 11437 / NCIMB 947 / NCTC 947) (Lactobacillus brevis)).